The chain runs to 222 residues: Ornithine decarboxylase antizyme 1 (222 aa).

It belongs to the ODC antizyme family. Interacts with ODC1 and thereby sterically blocks ODC homodimerization. Forms a ternary complex with PSMB4 and OAZ1 before PSMB4 is incorporated into the 20S proteasome. Interacts with AZIN2; this interaction disrupts the interaction between the antizyme and ODC1. Interacts with FAM171A1.

Functionally, ornithine decarboxylase (ODC) antizyme protein that negatively regulates ODC activity and intracellular polyamine biosynthesis and uptake in response to increased intracellular polyamine levels. Binds to ODC monomers, inhibiting the assembly of the functional ODC homodimer, and targets the monomers for ubiquitin-independent proteolytic destruction by the 26S proteasome. Triggers ODC degradation by inducing the exposure of a cryptic proteasome-interacting surface of ODC. Stabilizes AZIN2 by interfering with its ubiquitination. Also inhibits cellular uptake of polyamines by inactivating the polyamine uptake transporter. SMAD1/OAZ1/PSMB4 complex mediates the degradation of the CREBBP/EP300 repressor SNIP1. Involved in the translocation of AZIN2 from ER-Golgi intermediate compartment (ERGIC) to the cytosol. This Mesocricetus auratus (Golden hamster) protein is Ornithine decarboxylase antizyme 1 (OAZ1).